The chain runs to 205 residues: Guanylate kinase (205 aa).

The Guanylate kinase-like domain occupies 7–185; sequence GNIFIISAAS…AEEDLRHIVN (179 aa). 14-21 contributes to the ATP binding site; it reads AASGTGKT.

Belongs to the guanylate kinase family.

The protein localises to the cytoplasm. It carries out the reaction GMP + ATP = GDP + ADP. Functionally, essential for recycling GMP and indirectly, cGMP. In Neisseria meningitidis serogroup B (strain ATCC BAA-335 / MC58), this protein is Guanylate kinase (gmk).